Reading from the N-terminus, the 96-residue chain is uncharacterized protein (96 aa).

The protein belongs to the NifU family.

This is an uncharacterized protein from Azotobacter vinelandii.